The primary structure comprises 159 residues: Protein UXT homolog (159 aa).

Belongs to the UXT family.

The polypeptide is Protein UXT homolog (Nematostella vectensis (Starlet sea anemone)).